The sequence spans 167 residues: Disulfide bond formation protein B (167 aa).

Residues 1-12 (MFLNLLDAPRRL) lie on the Cytoplasmic side of the membrane. Residues 13-29 (LALVALGCVALLAFGLY) traverse the membrane as a helical segment. Residues 30–47 (LQHVVGLEPCPMCIVQRY) are Periplasmic-facing. Cys39 and Cys42 are joined by a disulfide. A helical membrane pass occupies residues 48 to 63 (ALVLVAIVAGLTAITS). Over 64–69 (NKKGLI) the chain is Cytoplasmic. The helical transmembrane segment at 70-87 (TGSGVLLLLAGFGAFVAA) threads the bilayer. Residues 88 to 143 (RQSFLQWYPPEVASCGRDFYGMIETFPLQRAIPMIFKGSGDCAKVDWTFLGGSIAN) are Periplasmic-facing. Cysteines 102 and 129 form a disulfide. A helical membrane pass occupies residues 144–162 (WSFVCFAVIGLTALTLIAR). Residues 163-167 (LARQR) are Cytoplasmic-facing.

It belongs to the DsbB family.

It is found in the cell inner membrane. Functionally, required for disulfide bond formation in some periplasmic proteins. Acts by oxidizing the DsbA protein. The sequence is that of Disulfide bond formation protein B from Polaromonas naphthalenivorans (strain CJ2).